Reading from the N-terminus, the 301-residue chain is Phosphatidylserine decarboxylase proenzyme (301 aa).

Residues aspartate 117, histidine 173, and serine 260 each act as charge relay system; for autoendoproteolytic cleavage activity in the active site. Serine 260 (schiff-base intermediate with substrate; via pyruvic acid; for decarboxylase activity) is an active-site residue. Serine 260 bears the Pyruvic acid (Ser); by autocatalysis mark.

Belongs to the phosphatidylserine decarboxylase family. PSD-B subfamily. Prokaryotic type II sub-subfamily. As to quaternary structure, heterodimer of a large membrane-associated beta subunit and a small pyruvoyl-containing alpha subunit. Requires pyruvate as cofactor. Post-translationally, is synthesized initially as an inactive proenzyme. Formation of the active enzyme involves a self-maturation process in which the active site pyruvoyl group is generated from an internal serine residue via an autocatalytic post-translational modification. Two non-identical subunits are generated from the proenzyme in this reaction, and the pyruvate is formed at the N-terminus of the alpha chain, which is derived from the carboxyl end of the proenzyme. The autoendoproteolytic cleavage occurs by a canonical serine protease mechanism, in which the side chain hydroxyl group of the serine supplies its oxygen atom to form the C-terminus of the beta chain, while the remainder of the serine residue undergoes an oxidative deamination to produce ammonia and the pyruvoyl prosthetic group on the alpha chain. During this reaction, the Ser that is part of the protease active site of the proenzyme becomes the pyruvoyl prosthetic group, which constitutes an essential element of the active site of the mature decarboxylase.

It is found in the cell membrane. It carries out the reaction a 1,2-diacyl-sn-glycero-3-phospho-L-serine + H(+) = a 1,2-diacyl-sn-glycero-3-phosphoethanolamine + CO2. Its pathway is phospholipid metabolism; phosphatidylethanolamine biosynthesis; phosphatidylethanolamine from CDP-diacylglycerol: step 2/2. Its function is as follows. Catalyzes the formation of phosphatidylethanolamine (PtdEtn) from phosphatidylserine (PtdSer). The polypeptide is Phosphatidylserine decarboxylase proenzyme (Chlamydia trachomatis serovar L2b (strain UCH-1/proctitis)).